The primary structure comprises 596 residues: Zinc finger E-box-binding homeobox protein zag-1 (596 aa).

The C2H2-type 1 zinc finger occupies Phe-24–His-46. Residues Phe-52 to Ser-72 form a C2H2-type 2; degenerate zinc finger. Over residues Leu-133 to Pro-145 the composition is skewed to polar residues. Disordered regions lie at residues Leu-133 to Arg-225, Asn-324 to Trp-369, and Gly-395 to Ser-421. Residues Ser-165–Asp-179 are compositionally biased toward basic and acidic residues. Residues Pro-188 to Gln-200 show a composition bias toward polar residues. A compositionally biased stretch (low complexity) spans Asn-201 to Lys-216. A DNA-binding region (homeobox) is located at residues Pro-223–Asn-282. Residues Gln-331–Pro-355 show a composition bias toward basic and acidic residues. C2H2-type zinc fingers lie at residues Phe-481 to His-503 and Tyr-509 to His-531. The C2H2-type 5; degenerate zinc finger occupies Phe-537 to Tyr-560. Residues Gln-569–Thr-596 are disordered. The span at Asn-578–Asn-590 shows a compositional bias: low complexity.

In terms of tissue distribution, expressed in the six touch receptor neurons (TRNs) but not in the FLP and PVD neurons. Expressed in the M4 cholinergic motor neuron.

The protein resides in the nucleus. Transcription factor. Down-regulates expression of genes involved in either the synthesis or reuptake of serotonin, dopamine and GABA. Acts as a transcriptional repressor to regulate multiple, discrete, neuron-specific aspects of terminal differentiation, including cell migration, axonal development and gene expression. Promotes touch receptor neuron differentiation by repressing the expression of egl-44 and egl-46. As egl-44 and egl-46, probably acting as a heterodimer, repress expression of zag-1 in FLP neurons, together these proteins form a bistable, negative-feedback loop that regulates the choice between neuronal fates. Required for axon guidance. Involved in the proper development of the pharynx. Required for pharynx isthmus peristalsis, probably via a role in the differentiation of the M4 cholinergic motor neuron. Directly represses its own transcription by interacting with conserved E-box sequence motifs 5'-CACCTG-3' in its own promoter. May also act as a transcriptional activator of the homeodomain ceh-28. This is Zinc finger E-box-binding homeobox protein zag-1 from Caenorhabditis elegans.